A 202-amino-acid polypeptide reads, in one-letter code: Proteasome subunit beta 1 (202 aa).

The propeptide at 1–8 is removed in mature form; by autocatalysis; that stretch reads MGEVVLPG. Thr-9 serves as the catalytic Nucleophile.

The protein belongs to the peptidase T1B family. In terms of assembly, the 20S proteasome core is composed of 14 alpha and 14 beta subunits that assemble into four stacked heptameric rings, resulting in a barrel-shaped structure. The two inner rings, each composed of seven catalytic beta subunits, are sandwiched by two outer rings, each composed of seven alpha subunits. The catalytic chamber with the active sites is on the inside of the barrel. Has a gated structure, the ends of the cylinder being occluded by the N-termini of the alpha-subunits. Is capped at one or both ends by the proteasome regulatory ATPase, PAN.

The protein localises to the cytoplasm. It catalyses the reaction Cleavage of peptide bonds with very broad specificity.. The formation of the proteasomal ATPase PAN-20S proteasome complex, via the docking of the C-termini of PAN into the intersubunit pockets in the alpha-rings, triggers opening of the gate for substrate entry. Interconversion between the open-gate and close-gate conformations leads to a dynamic regulation of the 20S proteasome proteolysis activity. Functionally, component of the proteasome core, a large protease complex with broad specificity involved in protein degradation. This chain is Proteasome subunit beta 1, found in Desulfurococcus amylolyticus (strain DSM 18924 / JCM 16383 / VKM B-2413 / 1221n) (Desulfurococcus kamchatkensis).